We begin with the raw amino-acid sequence, 194 residues long: Mitochondrial import inner membrane translocase subunit Tim22 (194 aa).

Intrachain disulfides connect cysteine 69–cysteine 141 and cysteine 160–cysteine 179. Transmembrane regions (helical) follow at residues valine 74 to isoleucine 94, methionine 123 to valine 143, and alanine 170 to aspartate 190.

It belongs to the Tim17/Tim22/Tim23 family. As to quaternary structure, component of the TIM22 complex, whose core is composed of TIMM22, associated with peripheral protein FXC1/TIMM10B and the 70 kDa heterohexamer. In most cases, the 70 kDa complex is composed of TIMM9 and TIMM10 (TIMM10A or TIMM10B). A small fraction of the 70 kDa complex is composed of TIMM8 (TIMM8A/DDP1 or TIMM8B/DDP2) and TIMM13. The TIM22 complex also contains AGK and TIMM29. Interacts directly with TIMM9, TIMM10A and FXC1/TIMM10B. Interacts (when oxidized) with TIMM29; interaction is direct. In terms of processing, disulfide bonds promote efficient assembly of the TIM22 complex.

The protein localises to the mitochondrion inner membrane. Essential core component of the TIM22 complex, a complex that mediates the import and insertion of multi-pass transmembrane proteins into the mitochondrial inner membrane. In the TIM22 complex, it constitutes the voltage-activated and signal-gated channel. Forms a twin-pore translocase that uses the membrane potential as external driving force in 2 voltage-dependent steps. This Mus musculus (Mouse) protein is Mitochondrial import inner membrane translocase subunit Tim22 (Timm22).